The sequence spans 99 residues: Aspartyl/glutamyl-tRNA(Asn/Gln) amidotransferase subunit C (99 aa).

Belongs to the GatC family. As to quaternary structure, heterotrimer of A, B and C subunits.

It carries out the reaction L-glutamyl-tRNA(Gln) + L-glutamine + ATP + H2O = L-glutaminyl-tRNA(Gln) + L-glutamate + ADP + phosphate + H(+). The catalysed reaction is L-aspartyl-tRNA(Asn) + L-glutamine + ATP + H2O = L-asparaginyl-tRNA(Asn) + L-glutamate + ADP + phosphate + 2 H(+). Functionally, allows the formation of correctly charged Asn-tRNA(Asn) or Gln-tRNA(Gln) through the transamidation of misacylated Asp-tRNA(Asn) or Glu-tRNA(Gln) in organisms which lack either or both of asparaginyl-tRNA or glutaminyl-tRNA synthetases. The reaction takes place in the presence of glutamine and ATP through an activated phospho-Asp-tRNA(Asn) or phospho-Glu-tRNA(Gln). The chain is Aspartyl/glutamyl-tRNA(Asn/Gln) amidotransferase subunit C from Paraburkholderia phymatum (strain DSM 17167 / CIP 108236 / LMG 21445 / STM815) (Burkholderia phymatum).